Here is a 237-residue protein sequence, read N- to C-terminus: Endonuclease V (237 aa).

2 residues coordinate Mg(2+): D46 and D114.

Belongs to the endonuclease V family. Requires Mg(2+) as cofactor.

The protein localises to the cytoplasm. The catalysed reaction is Endonucleolytic cleavage at apurinic or apyrimidinic sites to products with a 5'-phosphate.. Functionally, DNA repair enzyme involved in the repair of deaminated bases. Selectively cleaves double-stranded DNA at the second phosphodiester bond 3' to a deoxyinosine leaving behind the intact lesion on the nicked DNA. The protein is Endonuclease V of Xanthomonas oryzae pv. oryzae (strain PXO99A).